We begin with the raw amino-acid sequence, 360 residues long: Photosystem II protein D1 (360 aa).

The next 3 helical transmembrane spans lie at 29–46 (YIGW…TATT), 118–133 (HFLL…EWEL), and 142–156 (WICV…AATA). Histidine 118 contributes to the chlorophyll a binding site. Tyrosine 126 provides a ligand contact to pheophytin a. [CaMn4O5] cluster is bound by residues aspartate 170 and glutamate 189. The helical transmembrane segment at 197 to 218 (FHMAGVAGVFGGALFSAMHGSL) threads the bilayer. Histidine 198 contributes to the chlorophyll a binding site. A quinone is bound by residues histidine 215 and 264–265 (SF). Histidine 215 lines the Fe cation pocket. Histidine 272 contributes to the Fe cation binding site. Residues 274-288 (FLGLWPVVGIWLTSI) traverse the membrane as a helical segment. [CaMn4O5] cluster contacts are provided by histidine 332, glutamate 333, aspartate 342, and alanine 344. Residues 345–360 (DNSLLPVASSSPSINS) constitute a propeptide that is removed on maturation.

Belongs to the reaction center PufL/M/PsbA/D family. As to quaternary structure, PSII is composed of 1 copy each of membrane proteins PsbA, PsbB, PsbC, PsbD, PsbE, PsbF, PsbH, PsbI, PsbJ, PsbK, PsbL, PsbM, PsbT, PsbY, PsbZ, Psb30/Ycf12, at least 3 peripheral proteins of the oxygen-evolving complex and a large number of cofactors. It forms dimeric complexes. The cofactor is The D1/D2 heterodimer binds P680, chlorophylls that are the primary electron donor of PSII, and subsequent electron acceptors. It shares a non-heme iron and each subunit binds pheophytin, quinone, additional chlorophylls, carotenoids and lipids. D1 provides most of the ligands for the Mn4-Ca-O5 cluster of the oxygen-evolving complex (OEC). There is also a Cl(-1) ion associated with D1 and D2, which is required for oxygen evolution. The PSII complex binds additional chlorophylls, carotenoids and specific lipids.. In terms of processing, tyr-161 forms a radical intermediate that is referred to as redox-active TyrZ, YZ or Y-Z.

The protein localises to the plastid. The protein resides in the chloroplast thylakoid membrane. It catalyses the reaction 2 a plastoquinone + 4 hnu + 2 H2O = 2 a plastoquinol + O2. In terms of biological role, photosystem II (PSII) is a light-driven water:plastoquinone oxidoreductase that uses light energy to abstract electrons from H(2)O, generating O(2) and a proton gradient subsequently used for ATP formation. It consists of a core antenna complex that captures photons, and an electron transfer chain that converts photonic excitation into a charge separation. The D1/D2 (PsbA/PsbD) reaction center heterodimer binds P680, the primary electron donor of PSII as well as several subsequent electron acceptors. The chain is Photosystem II protein D1 from Cyanidium caldarium (Red alga).